The sequence spans 200 residues: Protein GrpE (200 aa).

The segment covering 1–11 (MSNQTNKAQDN) has biased composition (polar residues). Residues 1–25 (MSNQTNKAQDNQVEEIVEGELLNEN) form a disordered region.

This sequence belongs to the GrpE family. In terms of assembly, homodimer.

The protein resides in the cytoplasm. Participates actively in the response to hyperosmotic and heat shock by preventing the aggregation of stress-denatured proteins, in association with DnaK and GrpE. It is the nucleotide exchange factor for DnaK and may function as a thermosensor. Unfolded proteins bind initially to DnaJ; upon interaction with the DnaJ-bound protein, DnaK hydrolyzes its bound ATP, resulting in the formation of a stable complex. GrpE releases ADP from DnaK; ATP binding to DnaK triggers the release of the substrate protein, thus completing the reaction cycle. Several rounds of ATP-dependent interactions between DnaJ, DnaK and GrpE are required for fully efficient folding. In Shewanella pealeana (strain ATCC 700345 / ANG-SQ1), this protein is Protein GrpE.